Reading from the N-terminus, the 185-residue chain is Probable chorismate pyruvate-lyase 1 (185 aa).

Substrate contacts are provided by Arg-70, Leu-108, and Glu-166.

The protein belongs to the UbiC family.

It localises to the cytoplasm. The catalysed reaction is chorismate = 4-hydroxybenzoate + pyruvate. It participates in cofactor biosynthesis; ubiquinone biosynthesis. Its function is as follows. Removes the pyruvyl group from chorismate, with concomitant aromatization of the ring, to provide 4-hydroxybenzoate (4HB) for the ubiquinone pathway. This is Probable chorismate pyruvate-lyase 1 from Pseudomonas fluorescens (strain Pf0-1).